Here is a 922-residue protein sequence, read N- to C-terminus: Pertactin autotransporter (922 aa).

A signal peptide spans 1–34 (MNMSLSRIVKAAPLRRTTLAMALGALGAAPAAYA). The Cell attachment site; involved in adhesion to various eukaryotic cell lines signature appears at 260–262 (RGD). Tandem repeats lie at residues 266-270 (GGAVP), 271-275 (GGAVP), and 276-280 (GGAVP). The tract at residues 266 to 290 (GGAVPGGAVPGGAVPGGFGPLLDGW) is 4 X 5 AA tandem repeats of G-G-A-V-P. A 4; approximate repeat occupies 281–285 (GGFGP). Residues 561 to 619 (SLVGAKAPPAPKPAPQPGPQPGPQPPQPPQPPQPPQPPQPPQRQPEAPAPQPPAGRELS) form a disordered region. Residues 568-613 (PPAPKPAPQPGPQPGPQPPQPPQPPQPPQPPQPPQRQPEAPAPQPP) are compositionally biased toward pro residues. Residues 575–603 (PQPGPQPGPQPPQPPQPPQPPQPPQPPQR) are 9 X 3 AA approximate repeats of P-Q-P. The Autotransporter domain occupies 654-922 (LNPDAGGAWG…TFHAGYRYSW (269 aa)).

Monomer.

The protein localises to the periplasm. The protein resides in the secreted. It localises to the cell surface. It is found in the cell outer membrane. Agglutinogen that binds to eukaryotic cells; a process mediated by the R-G-D sequence. Pertactin may have a role in bacterial adhesion, and thus play a role in virulence. May contribute to the disease state of whooping cough. This is Pertactin autotransporter (prn) from Bordetella parapertussis (strain 12822 / ATCC BAA-587 / NCTC 13253).